A 510-amino-acid polypeptide reads, in one-letter code: 2,3-bisphosphoglycerate-independent phosphoglycerate mutase (510 aa).

The Mn(2+) site is built by Asp-12 and Ser-62. The active-site Phosphoserine intermediate is the Ser-62. Residues His-123, 152–153 (RD), Arg-184, Arg-190, 257–260 (RADR), and Lys-331 contribute to the substrate site. Mn(2+)-binding residues include Asp-399, His-403, Asp-440, His-441, and His-458.

This sequence belongs to the BPG-independent phosphoglycerate mutase family. As to quaternary structure, monomer. Mn(2+) serves as cofactor.

The enzyme catalyses (2R)-2-phosphoglycerate = (2R)-3-phosphoglycerate. Its pathway is carbohydrate degradation; glycolysis; pyruvate from D-glyceraldehyde 3-phosphate: step 3/5. In terms of biological role, catalyzes the interconversion of 2-phosphoglycerate and 3-phosphoglycerate. This Lawsonia intracellularis (strain PHE/MN1-00) protein is 2,3-bisphosphoglycerate-independent phosphoglycerate mutase.